The following is a 407-amino-acid chain: Probable 2,3-bisphosphoglycerate-independent phosphoglycerate mutase (407 aa).

A disordered region spans residues Gly175 to Asn200.

It belongs to the BPG-independent phosphoglycerate mutase family. A-PGAM subfamily.

It carries out the reaction (2R)-2-phosphoglycerate = (2R)-3-phosphoglycerate. The protein operates within carbohydrate degradation; glycolysis; pyruvate from D-glyceraldehyde 3-phosphate: step 3/5. Catalyzes the interconversion of 2-phosphoglycerate and 3-phosphoglycerate. The chain is Probable 2,3-bisphosphoglycerate-independent phosphoglycerate mutase from Aquifex aeolicus (strain VF5).